Here is a 34-residue protein sequence, read N- to C-terminus: Phalloidin proprotein (34 aa).

Residues 1 to 10 (MSDINTTCLP) constitute a propeptide that is removed on maturation. A cross-link (cyclopeptide (Ala-Pro)) is located at residues 11-17 (AWLATCP). The 2'-cysteinyl-6'-hydroxytryptophan sulfoxide (Trp-Cys) cross-link spans 12-16 (WLATC). A propeptide spanning residues 18 to 34 (CTGDDVNPTLTCGESLC) is cleaved from the precursor.

It belongs to the MSDIN fungal toxin family. Post-translationally, processed by the macrocyclase-peptidase enzyme POPB to yield a toxic cyclic heptapeptide. POPB first removes 10 residues from the N-terminus. Conformational trapping of the remaining peptide forces the enzyme to release this intermediate rather than proceed to macrocyclization. The enzyme rebinds the remaining peptide in a different conformation and catalyzes macrocyclization of the N-terminal 7 residues.

Toxin that belongs to the bicyclic heptapeptides called phallotoxins. Although structurally related to amatoxins, phallotoxins have a different mode of action, which is the stabilization of F-actin. Phallotoxins are poisonous when administered parenterally, but not orally because of poor absorption. The polypeptide is Phalloidin proprotein (Amanita phalloides (Death cap)).